The following is a 328-amino-acid chain: Stress response kinase A (328 aa).

Residue Asp-201 is the Proton acceptor of the active site. Positions 206 and 217 each coordinate Mg(2+). Residue Asp-217 is part of the active site.

It belongs to the SrkA/RdoA protein kinase family. As to quaternary structure, monomer. Mg(2+) serves as cofactor.

The protein localises to the cytoplasm. The catalysed reaction is L-seryl-[protein] + ATP = O-phospho-L-seryl-[protein] + ADP + H(+). The enzyme catalyses L-threonyl-[protein] + ATP = O-phospho-L-threonyl-[protein] + ADP + H(+). A protein kinase that phosphorylates Ser and Thr residues. Probably acts to suppress the effects of stress linked to accumulation of reactive oxygen species. Probably involved in the extracytoplasmic stress response. This is Stress response kinase A from Salmonella choleraesuis (strain SC-B67).